A 270-amino-acid chain; its full sequence is Nuclease P1 (270 aa).

5 residues coordinate a divalent metal cation: Trp-1, His-6, His-15, Asp-45, and His-60. 1–6 (WGALGH) provides a ligand contact to substrate. Substrate is bound by residues 45 to 51 (DEYRLTS), 60 to 63 (HFID), and 73 to 78 (NVDYER). Cystine bridges form between Cys-72/Cys-217 and Cys-80/Cys-85. Asn-92 carries an N-linked (GlcNAc...) asparagine glycan. His-116, Asp-120, and His-126 together coordinate a divalent metal cation. The interval 116-164 (HFIGDMTQPLHDEAYAVGGNKINVTFDGYHDNLHSDWDTYMPQKLIGGH) is substrate binding. Asn-138 carries an N-linked (GlcNAc...) asparagine glycan. Residues His-149 and Asp-153 each coordinate a divalent metal cation. 2 N-linked (GlcNAc...) asparagine glycosylation sites follow: Asn-184 and Asn-197.

It belongs to the nuclease type I family. Zn(2+) is required as a cofactor.

It is found in the secreted. The catalysed reaction is Endonucleolytic cleavage to 5'-phosphomononucleotide and 5'-phosphooligonucleotide end-products.. Functionally, hydrolyzes only single-stranded DNA and RNA without apparent specificity for bases. This is Nuclease P1 from Penicillium citrinum.